A 384-amino-acid polypeptide reads, in one-letter code: DNA polymerase IV (384 aa).

Residues 5-182 (IIHVDMDAFF…LPVTKVHGIG (178 aa)) enclose the UmuC domain. Positions 9, 10, and 103 each coordinate Mg(2+). Glu-104 is a catalytic residue.

This sequence belongs to the DNA polymerase type-Y family. Monomer. The cofactor is Mg(2+).

The protein localises to the cytoplasm. The enzyme catalyses DNA(n) + a 2'-deoxyribonucleoside 5'-triphosphate = DNA(n+1) + diphosphate. Its function is as follows. Poorly processive, error-prone DNA polymerase involved in translesion repair and untargeted mutagenesis. Copies undamaged DNA at stalled replication forks, which arise in vivo from mismatched or misaligned primer ends. These misaligned primers can be extended by PolIV. Exhibits no 3'-5' exonuclease (proofreading) activity. Involved in translesional synthesis. Primer extension fidelity in vitro is temperature-dependent. Inserts a correct base opposite templating bases at 70 degrees Celsius, but at 37 degrees Celsius in addition to correct base pairing, base transitions, transversions and frameshifts can occur. Preferably forms erroneous base pairs C:T. Bypasses 8-oxo-dG oxidative damage by incorporating dATP or dCTP opposite of the damaged DNA template site at both temperatures in vitro. This chain is DNA polymerase IV, found in Caldanaerobacter subterraneus subsp. tengcongensis (strain DSM 15242 / JCM 11007 / NBRC 100824 / MB4) (Thermoanaerobacter tengcongensis).